The primary structure comprises 450 residues: Magnesium transporter MgtE (450 aa).

Topologically, residues 1-283 are cytoplasmic; sequence MEEKLAVSLQ…SEAGPVALWL (283 aa). The Mg(2+) site is built by Glu-59, Asp-91, Asp-95, and Gly-136. CBS domains follow at residues 138 to 200 and 202 to 258; these read MTPE…RVAE and MNPK…EATE. 5 residues coordinate ATP: Tyr-170, Ser-185, Arg-187, Asp-188, and Val-207. Glu-216, Ala-223, Asp-226, Asp-247, Asp-250, Glu-255, Glu-258, and Asp-259 together coordinate Mg(2+). Position 275 (Glu-275) interacts with Ca(2+). Glu-275, Gln-304, Glu-307, and Glu-311 together coordinate Mn(2+). A helical transmembrane segment spans residues 284–306; the sequence is ARVRWLVILILTGMVTSSILQGF. Topologically, residues 307–315 are periplasmic; sequence ESVLEAVTA. Glu-311 is a binding site for Ca(2+). The chain crosses the membrane as a helical span at residues 316-337; sequence LAFYVPVLLGTGGNTGNQSATL. Residues 338–351 lie on the Cytoplasmic side of the membrane; the sequence is IIRALATRDLDLRD. The chain crosses the membrane as a helical span at residues 352-381; it reads WRRVFLKEMGVGLLLGLTLSFLLVGKVYWD. At 382–385 the chain is on the periplasmic side; it reads GHPL. His-383 lines the Mn(2+) pocket. A helical transmembrane segment spans residues 386–409; the sequence is LLPVVGVSLVLIVFFANLVGAMLP. At 410 to 420 the chain is on the cytoplasmic side; that stretch reads FLLRRLGVDPA. Residues Asp-418, Ala-428, and Asp-432 each coordinate Mg(2+). Residues 421–443 traverse the membrane as a helical segment; the sequence is LVSNPLVATLSDVTGLLIYLSVA. The Periplasmic segment spans residues 444-450; the sequence is RLLLEAV.

This sequence belongs to the SLC41A transporter family. In terms of assembly, homodimer.

It localises to the cell inner membrane. The catalysed reaction is Mg(2+)(in) = Mg(2+)(out). The channel activity is regulated via the N-terminal cytoplasmic region, which acts as a Mg(2+) sensor to regulate the gating of the ion-conducting pore in response to the intracellular magnesium concentration. Under high-intracellular magnesium conditions, binding of magnesium to the N-terminal cytoplasmic domain stabilizes the closed conformation of the channel. Under low-intracellular magnesium conditions, the channel is in equilibrium between the open and closed states. A cation-binding site within the membrane (M1) strictly recognizes the size and geometry of the Mg(2+) hydration shells, which may be important for the selective transport of Mg(2+) over other cations. Cation-binding sites on the periplasmic side (M2 and M3) regulate channel opening and prevent conduction of near-cognate cations. Binding of Mn(2+) to the periplasmic sites strongly inhibits the Mg(2+) transport activity. In addition, activity is regulated by ATP, which binds to MgtE and modulates its Mg(2+)-dependent channel gating. ATP binding enhances the intracellular domain affinity for Mg(2+) within physiological concentrations of this divalent cation, enabling MgtE to function as an in vivo Mg(2+) sensor. ATP dissociation from MgtE upregulates Mg(2+) influx at both high and low intracellular Mg(2+) concentrations. Its function is as follows. Highly selective magnesium channel that plays an important role in Mg(2+) homeostasis. Functions as a Mg(2+)-dependent gating channel. Exhibits low activity with cobalt, suggesting that it might also be involved in the uptake of Co(2+) as a micronutrient. Also exhibits low activity with Ca(2+), but it shows almost no activity with Mn(2+). This is Magnesium transporter MgtE from Thermus thermophilus (strain ATCC 27634 / DSM 579 / HB8).